Here is a 163-residue protein sequence, read N- to C-terminus: HTH-type transcriptional regulator IscR (163 aa).

The region spanning 2–131 (RLTSKGRYAV…NNITLGELVN (130 aa)) is the HTH rrf2-type domain. The H-T-H motif DNA-binding region spans 28–51 (LADISERQGISLSYLEQLFSRLRK). The [2Fe-2S] cluster site is built by cysteine 92, cysteine 98, and cysteine 104. Positions 140–149 (DRQHTHDAPR) are enriched in basic and acidic residues. The disordered stretch occupies residues 140-163 (DRQHTHDAPRSTRTQDAIDVKLRA).

The cofactor is [2Fe-2S] cluster.

Its function is as follows. Regulates the transcription of several operons and genes involved in the biogenesis of Fe-S clusters and Fe-S-containing proteins. The protein is HTH-type transcriptional regulator IscR of Citrobacter koseri (strain ATCC BAA-895 / CDC 4225-83 / SGSC4696).